The chain runs to 174 residues: ATP-dependent protease subunit HslV (174 aa).

The active site involves T2. The Na(+) site is built by G157, D160, and T163.

Belongs to the peptidase T1B family. HslV subfamily. As to quaternary structure, a double ring-shaped homohexamer of HslV is capped on each side by a ring-shaped HslU homohexamer. The assembly of the HslU/HslV complex is dependent on binding of ATP.

Its subcellular location is the cytoplasm. It catalyses the reaction ATP-dependent cleavage of peptide bonds with broad specificity.. Its activity is regulated as follows. Allosterically activated by HslU binding. Functionally, protease subunit of a proteasome-like degradation complex believed to be a general protein degrading machinery. This chain is ATP-dependent protease subunit HslV, found in Aliivibrio fischeri (strain MJ11) (Vibrio fischeri).